A 211-amino-acid chain; its full sequence is Protein 33K (211 aa).

2 disordered regions span residues 1–95 (MPPK…PCSL) and 107–140 (AGSPTAPAAPTKRLEKTPRVRKTSSAIATRQDSP). A compositionally biased stretch (acidic residues) spans 24-65 (DEEETWDDSQAEEVSDEEAEEQMESWDSLDEEDLEDVEEETI). Positions 83 to 92 (KTIPPLPPQP) are enriched in pro residues. The segment covering 129-140 (TSSAIATRQDSP) has biased composition (polar residues). Residues 154–181 (YAIFQQSRGQQLELKVKNRSLRSLTRSC) are necessary for nuclear subcellular location. The segment at 160–180 (SRGQQLELKVKNRSLRSLTRS) is RS-repeat; required for splicing enhancer activity.

The protein belongs to the adenoviridae splicing factor family. As to quaternary structure, homooligomer. Interacts with DBP; this interaction occurs at a unique vertex during genome packaging. Interacts with IVa2; this interaction occurs at a unique vertex during genome packaging and seems to potentiate IVa2 and 33K oligomerization. Post-translationally, phosphorylated in vitro by human PKA and PRKDC. PRKDC inhibits, whereas PKA activates the splicing factor.

It localises to the host nucleus. In terms of biological role, promotes alternative splicing of late transcripts by promoting splicing at weak 3' splice sites. Required for the temporal activation of major late pre-mRNA splicing at late times of infection. Induces the splicing and expression of the late capsid vertex protein. Functionally, probably functions as the small terminase that is part of the molecular motor that translocates genomic DNA in empty capsid during DNA packaging. This motor is located at a unique vertex and comprises at least the IVa2 ATPase, the small terminase 33K and probably a portal. Forms a ring-like structure of about 17 nm in which genomic DNA is translocated into the capsid. Stimulates IVa2 ATPase activity in the presence of the viral genome. Once the DNA is packaged, the terminase detaches: the 33K protein is present in the empty particles, but not in the mature virions. Also involved in virion assembly. This is Protein 33K from Human adenovirus F serotype 40 (HAdV-40).